We begin with the raw amino-acid sequence, 299 residues long: Tyrosine recombinase XerC (299 aa).

The region spanning 1–85 is the Core-binding (CB) domain; the sequence is MKRQLEAYCA…AVRGLYRYLN (85 aa). The Tyr recombinase domain occupies 106 to 285; the sequence is RLPKVLDTDR…DFQHLAAVYD (180 aa). Residues R146, K170, H237, R240, and H263 contribute to the active site. Y272 acts as the O-(3'-phospho-DNA)-tyrosine intermediate in catalysis.

It belongs to the 'phage' integrase family. XerC subfamily. Forms a cyclic heterotetrameric complex composed of two molecules of XerC and two molecules of XerD.

Its subcellular location is the cytoplasm. Its function is as follows. Site-specific tyrosine recombinase, which acts by catalyzing the cutting and rejoining of the recombining DNA molecules. The XerC-XerD complex is essential to convert dimers of the bacterial chromosome into monomers to permit their segregation at cell division. It also contributes to the segregational stability of plasmids. The chain is Tyrosine recombinase XerC from Pseudomonas putida (strain ATCC 700007 / DSM 6899 / JCM 31910 / BCRC 17059 / LMG 24140 / F1).